Reading from the N-terminus, the 426-residue chain is 3-phosphoshikimate 1-carboxyvinyltransferase (426 aa).

3-phosphoshikimate contacts are provided by K22, S23, and R27. A phosphoenolpyruvate-binding site is contributed by K22. Positions 96 and 124 each coordinate phosphoenolpyruvate. The 3-phosphoshikimate site is built by S170, S171, Q172, S198, D314, N337, and K341. Q172 contacts phosphoenolpyruvate. D314 functions as the Proton acceptor in the catalytic mechanism. 3 residues coordinate phosphoenolpyruvate: R345, R387, and K412.

Belongs to the EPSP synthase family. Monomer.

It localises to the cytoplasm. The enzyme catalyses 3-phosphoshikimate + phosphoenolpyruvate = 5-O-(1-carboxyvinyl)-3-phosphoshikimate + phosphate. Its pathway is metabolic intermediate biosynthesis; chorismate biosynthesis; chorismate from D-erythrose 4-phosphate and phosphoenolpyruvate: step 6/7. Its function is as follows. Catalyzes the transfer of the enolpyruvyl moiety of phosphoenolpyruvate (PEP) to the 5-hydroxyl of shikimate-3-phosphate (S3P) to produce enolpyruvyl shikimate-3-phosphate and inorganic phosphate. In Shewanella woodyi (strain ATCC 51908 / MS32), this protein is 3-phosphoshikimate 1-carboxyvinyltransferase.